The following is a 178-amino-acid chain: Extracellular fatty acid-binding protein (178 aa).

Positions 1 to 20 (MRTLALSLGLALLCLLHAKA) are cleaved as a signal peptide. Thr43 lines the enterobactin pocket. 1-tetradecanoyl-sn-glycerol 3-phosphate is bound by residues Tyr72 and Lys104. An intrachain disulfide couples Cys80 to Cys173. Residues Lys104, Arg123, and Arg134 each contribute to the enterobactin site. 134–136 (RLY) provides a ligand contact to 1-tetradecanoyl-sn-glycerol 3-phosphate.

The protein belongs to the calycin superfamily. Lipocalin family. Monomer.

The protein localises to the secreted. In terms of biological role, siderocalin-like lipocalin tightly binding a variety of bacterial ferric siderophores, also binds long-chain unsaturated fatty acids such as linoleic acid, oleic acid, arachidonic acid and, with a lower affinity, long chain saturated fatty acids such as steraic acid. May act as an antibacterial factor, through dual ligand specificity, both as a siderophore-sequestrating molecule and a lysophosphatidic acid (LPA) sensor. In Coturnix japonica (Japanese quail), this protein is Extracellular fatty acid-binding protein.